The following is a 1760-amino-acid chain: Chitin synthase csmB (1760 aa).

Over residues 1–17 the composition is skewed to low complexity; it reads MSNRFSVYSSHSTGVSS. The disordered stretch occupies residues 1–23; sequence MSNRFSVYSSHSTGVSSARPSAP. In terms of domain architecture, Myosin motor spans 1–374; it reads MSNRFSVYSS…TVSITVVDIP (374 aa). N-linked (GlcNAc...) asparagine glycosylation is present at N275. The tract at residues 344–363 is disordered; it reads LDNDPSTSGGSGPGGQWTDD. P374 is a region of interest (actin-binding). 2 helical membrane passes run 731–751 and 767–787; these read IWVG…LRWI and LVLM…IIAF. N-linked (GlcNAc...) asparagine glycosylation is found at N878, N906, and N995. Residues 1029–1049 form a helical membrane-spanning segment; sequence ILLSFTVLICAVILVKFVSAL. The N-linked (GlcNAc...) asparagine glycan is linked to N1394. 3 helical membrane-spanning segments follow: residues 1419–1439, 1452–1472, and 1480–1500; these read FVVL…VYLG, FPMI…IIFL, and IGWM…LPLY. N-linked (GlcNAc...) asparagine glycosylation is found at N1584 and N1652. A DEK-C domain is found at 1702-1758; it reads GPDEGAITEAIRACLAEVDLDTVTKKQVRALVEQRLQTTLMGDKRTFLDRQIDHELA.

This sequence in the N-terminal section; belongs to the TRAFAC class myosin-kinesin ATPase superfamily. Myosin family. It in the C-terminal section; belongs to the chitin synthase family. Class V subfamily.

It localises to the cell membrane. The protein resides in the cell septum. Its subcellular location is the cell tip. It carries out the reaction [(1-&gt;4)-N-acetyl-beta-D-glucosaminyl](n) + UDP-N-acetyl-alpha-D-glucosamine = [(1-&gt;4)-N-acetyl-beta-D-glucosaminyl](n+1) + UDP + H(+). Functionally, polymerizes chitin, a structural polymer of the cell wall and septum, by transferring the sugar moiety of UDP-GlcNAc to the non-reducing end of the growing chitin polymer. Plays an important role in septal growth or maintenance. Mediates colony spore formation. This chain is Chitin synthase csmB, found in Aspergillus niger (strain ATCC MYA-4892 / CBS 513.88 / FGSC A1513).